Here is a 512-residue protein sequence, read N- to C-terminus: ATP synthase subunit alpha (512 aa).

169–176 (GDRQTGKT) is a binding site for ATP.

This sequence belongs to the ATPase alpha/beta chains family. In terms of assembly, F-type ATPases have 2 components, CF(1) - the catalytic core - and CF(0) - the membrane proton channel. CF(1) has five subunits: alpha(3), beta(3), gamma(1), delta(1), epsilon(1). CF(0) has three main subunits: a(1), b(2) and c(9-12). The alpha and beta chains form an alternating ring which encloses part of the gamma chain. CF(1) is attached to CF(0) by a central stalk formed by the gamma and epsilon chains, while a peripheral stalk is formed by the delta and b chains.

It is found in the cell inner membrane. It catalyses the reaction ATP + H2O + 4 H(+)(in) = ADP + phosphate + 5 H(+)(out). Produces ATP from ADP in the presence of a proton gradient across the membrane. The alpha chain is a regulatory subunit. This chain is ATP synthase subunit alpha, found in Aromatoleum aromaticum (strain DSM 19018 / LMG 30748 / EbN1) (Azoarcus sp. (strain EbN1)).